The primary structure comprises 1182 residues: Rho GTPase-activating protein 20 (1182 aa).

Positions 1-40 (MEAMSPQQDALGAQPGRSSSLTGMSRIAGGPGTKKKMKTL) are disordered. Ser-46 is subject to Phosphoserine. The 101-residue stretch at 85–185 (TLLIDGPVEL…WLSLLQRYIA (101 aa)) folds into the PH domain. Positions 194–283 (KSIPLKIFAK…TALLTQGSRD (90 aa)) constitute a Ras-associating domain. Positions 365–551 (VSLPDLCEND…FLIENCCRVF (187 aa)) constitute a Rho-GAP domain. Phosphoserine occurs at positions 704 and 730. Disordered regions lie at residues 745–772 (QTQPQKKGDKVCLKQSSVTGTDVSKRNT), 803–839 (VASYSHGSSQDHPRKQAFDADPCRFSPPHLTDAQKSS), 935–955 (SYSSLSSPGSSPSGSSVSSQD), 982–1011 (TQRKQEELSSDFDSPSRLSGMPGPSMGQAS), 1074–1101 (LPSCASGTPEADSLQESQDDLQGDEGPG), and 1142–1182 (SGGQ…GTDI). Polar residues predominate over residues 758–772 (KQSSVTGTDVSKRNT). Basic and acidic residues predominate over residues 811–824 (SQDHPRKQAFDADP).

Functionally, GTPase activator for the Rho-type GTPases by converting them to an inactive GDP-bound state. The polypeptide is Rho GTPase-activating protein 20 (Arhgap20) (Mus musculus (Mouse)).